The chain runs to 629 residues: Flap endonuclease GEN-like 1 (629 aa).

Positions 1 to 87 (MGVGGSFWDL…DGQPSPLKSQ (87 aa)) are N-domain. Residues 2-98 (GVGGSFWDLL…RAARFFRGSG (97 aa)) form an XPG-N domain region. Mg(2+) is bound by residues Asp-31, Asp-78, Glu-148, Glu-150, Asp-169, Asp-171, and Asp-221. Positions 136-221 (EYLGMPVLRA…VAMALLVGSD (86 aa)) are XPG-I domain. Residues 136–225 (EYLGMPVLRA…LLVGSDHDLH (90 aa)) are I-domain. Positions 221 to 421 (DHDLHGVPGF…MLPMLSTIYL (201 aa)) are 5'-3' exonuclease domain. The disordered stretch occupies residues 594–617 (KKGLSGDSGKDGSRKSSDVDLSKN). Residues 601-614 (SGKDGSRKSSDVDL) show a composition bias toward basic and acidic residues.

This sequence belongs to the XPG/RAD2 endonuclease family. GEN subfamily. Monomer. Interacts with PCNA. PCNA stimulates the nuclease activity without altering cleavage specificity. Mg(2+) is required as a cofactor. In terms of tissue distribution, highly expressed in anthers. Expressed in roots and leaves.

The protein resides in the nucleus. Its function is as follows. Endonuclease which cleaves flap structures at the junction between single-stranded DNA and double-stranded DNA. Possesses both single-stranded and double-stranded DNA-binding activities. Involved in early microspore development, but does not alter meiosis or tapetal cells development. Possesses Holliday junction (HJ) resolvase activity in vitro. Cleaves HJ at symmetrically related sites of the branch point. This chain is Flap endonuclease GEN-like 1, found in Oryza sativa subsp. japonica (Rice).